Reading from the N-terminus, the 562-residue chain is Ikaros family zinc finger protein (562 aa).

3 C2H2-type zinc fingers span residues 45 to 67 (IKCEECGLICAGQSHYNVHIRSH), 73 to 95 (FKCHICGVAFTQKGNLRRHYKIH), and 101 to 123 (FQCPICSYRCRRRDALNGHMRIH). The segment at 129–152 (YRCSYCARSYKSRQSMKEHEYQCP) adopts a C2H2-type 4; degenerate zinc-finger fold. Disordered regions lie at residues 178–210 (NPLALPGPRPSTSQPAPVLSQLGQLGARPPPYP), 293–342 (QNQQ…VKPT), 361–404 (QLED…KEDD), and 451–473 (DESKNEISSVDSRSPLDQSSTQD). Over residues 307–326 (PSLSEATPSSHSSHSSAEDS) the composition is skewed to low complexity. The segment covering 327–336 (GQVNKFSPTE) has biased composition (polar residues). Basic and acidic residues predominate over residues 369-383 (DSRKRPHSFESEPTP). Residues 456–471 (EISSVDSRSPLDQSST) are compositionally biased toward polar residues. 2 consecutive C2H2-type zinc fingers follow at residues 494–516 (WECKTCNCIFLNEITYRIHMGVH) and 522–546 (LVCNSCGKRCSDQQEFQAHLVHHQH).

Belongs to the Ikaros C2H2-type zinc-finger protein family. Expression is strongest in the anterior Fol cells of the oikoplastic epithelium.

The protein localises to the nucleus. In Oikopleura dioica (Tunicate), this protein is Ikaros family zinc finger protein.